The chain runs to 149 residues: Large ribosomal subunit protein bL9 (149 aa).

It belongs to the bacterial ribosomal protein bL9 family.

In terms of biological role, binds to the 23S rRNA. The sequence is that of Large ribosomal subunit protein bL9 from Helicobacter acinonychis (strain Sheeba).